Consider the following 607-residue polypeptide: CUB and zona pellucida-like domain-containing protein 1 (607 aa).

Residues 1–24 form the signal peptide; sequence MELVRRLMPLTLLILSCLAELTMA. Residues C17 and C58 are joined by a disulfide bond. 2 consecutive CUB domains span residues 25-146 and 154-265; these read EAEG…YFFS and CGGY…YTSI. Residues 25 to 568 are Lumenal-facing; that stretch reads EAEGNASCTV…EETPNQPFNS (544 aa). 3 N-linked (GlcNAc...) asparagine glycosylation sites follow: N29, N57, and N67. Intrachain disulfides connect C85/C107, C154/C180, and C207/C229. The ZP domain maps to 276–519; the sequence is TCSSDRMRVI…SRCNQGCVSR (244 aa). 2 N-linked (GlcNAc...) asparagine glycosylation sites follow: N394 and N419. C442 and C498 are disulfide-bonded. A helical transmembrane segment spans residues 569-589; the sequence is VHLFSFMVLALNVVTVATITV. The Cytoplasmic segment spans residues 590-607; the sequence is RHFVNQRADYKYQKLQNY.

Detected in pancreas and epithelium of ovary. Expressed at higher levels in ovarian tumors than in normal tissue.

The protein resides in the zymogen granule membrane. Its function is as follows. Localized to zymogen granules, where it functions in trypsinogen activation. May indirectly regulate cell motility, cell-cell and cell/extracellular matrix interactions. This Homo sapiens (Human) protein is CUB and zona pellucida-like domain-containing protein 1.